The following is a 515-amino-acid chain: Probable cytosol aminopeptidase (515 aa).

Mn(2+) is bound by residues Lys274 and Asp279. The active site involves Lys286. The Mn(2+) site is built by Asp297, Asp356, and Glu358. The active site involves Arg360.

The protein belongs to the peptidase M17 family. Mn(2+) serves as cofactor.

Its subcellular location is the cytoplasm. It catalyses the reaction Release of an N-terminal amino acid, Xaa-|-Yaa-, in which Xaa is preferably Leu, but may be other amino acids including Pro although not Arg or Lys, and Yaa may be Pro. Amino acid amides and methyl esters are also readily hydrolyzed, but rates on arylamides are exceedingly low.. It carries out the reaction Release of an N-terminal amino acid, preferentially leucine, but not glutamic or aspartic acids.. Its function is as follows. Presumably involved in the processing and regular turnover of intracellular proteins. Catalyzes the removal of unsubstituted N-terminal amino acids from various peptides. The polypeptide is Probable cytosol aminopeptidase (Desulforapulum autotrophicum (strain ATCC 43914 / DSM 3382 / VKM B-1955 / HRM2) (Desulfobacterium autotrophicum)).